Consider the following 32-residue polypeptide: MSDIN-like toxin proprotein 1 (32 aa).

Residues 1–10 (MSDINATCLP) constitute a propeptide that is removed on maturation. The segment at residues 11 to 17 (AWLALCP) is a cross-link (cyclopeptide (Ala-Pro)). Residues 18–32 (CVGDDVNPTLTRGGT) constitute a propeptide that is removed on maturation.

This sequence belongs to the MSDIN fungal toxin family. Post-translationally, processed by the macrocyclase-peptidase enzyme POPB to yield a toxic cyclic heptapeptide. POPB first removes 10 residues from the N-terminus. Conformational trapping of the remaining peptide forces the enzyme to release this intermediate rather than proceed to macrocyclization. The enzyme rebinds the remaining peptide in a different conformation and catalyzes macrocyclization of the N-terminal 7 residues.

In terms of biological role, probable toxin that belongs to the MSDIN-like toxin family responsible for a large number of food poisoning cases and deaths. The protein is MSDIN-like toxin proprotein 1 of Amanita fuligineoides.